Here is a 339-residue protein sequence, read N- to C-terminus: AT-hook motif nuclear-localized protein 26 (339 aa).

Residues 1–12 show a composition bias toward polar residues; sequence MDPVQSHGSQSS. 2 disordered regions span residues 1-132 and 273-339; these read MDPV…NKPK and MQTP…RPPY. Residues 24–45 are compositionally biased toward low complexity; it reads LHLQQQQQHQQQHQQQQQQQFF. Residues 82–93 show a composition bias toward polar residues; the sequence is NMDNIANTNSGS. Positions 102–113 are enriched in gly residues; that stretch reads GGEGGSGGGGSG. The segment at residues 118–130 is a DNA-binding region (a.T hook); it reads RRPRGRPAGSKNK. Residues 142–279 enclose the PPC domain; that stretch reads ANALRTHVME…EDEMQTPVQG (138 aa). Residues 278-291 show a composition bias toward gly residues; the sequence is QGGGGGGGGGGGMG. A compositionally biased stretch (low complexity) spans 292–310; the sequence is SPPMMGQQQAMAAMAAAQG.

It is found in the nucleus. Its function is as follows. Transcription factor that specifically binds AT-rich DNA sequences related to the nuclear matrix attachment regions (MARs). The chain is AT-hook motif nuclear-localized protein 26 from Arabidopsis thaliana (Mouse-ear cress).